A 98-amino-acid polypeptide reads, in one-letter code: NADH-ubiquinone oxidoreductase chain 4L (98 aa).

3 helical membrane passes run 1 to 21, 29 to 49, and 61 to 81; these read MSLV…GLLM, SLLC…LTIL, and IILL…LVMV.

This sequence belongs to the complex I subunit 4L family. Core subunit of respiratory chain NADH dehydrogenase (Complex I) which is composed of 45 different subunits.

It localises to the mitochondrion inner membrane. It carries out the reaction a ubiquinone + NADH + 5 H(+)(in) = a ubiquinol + NAD(+) + 4 H(+)(out). Functionally, core subunit of the mitochondrial membrane respiratory chain NADH dehydrogenase (Complex I) which catalyzes electron transfer from NADH through the respiratory chain, using ubiquinone as an electron acceptor. Part of the enzyme membrane arm which is embedded in the lipid bilayer and involved in proton translocation. The chain is NADH-ubiquinone oxidoreductase chain 4L (MT-ND4L) from Muntiacus vuquangensis (Giant muntjac).